A 357-amino-acid chain; its full sequence is Holliday junction branch migration complex subunit RuvB (357 aa).

The segment covering 1–10 has biased composition (polar residues); it reads MAIQSDSLSS. The tract at residues 1–30 is disordered; the sequence is MAIQSDSLSSRPDAPRLVAPAPASPNEESI. The interval 5-195 is large ATPase domain (RuvB-L); the sequence is SDSLSSRPDA…FGIVSRLEFY (191 aa). ATP contacts are provided by residues Leu-34, Arg-35, Gly-76, Lys-79, Thr-80, Thr-81, 142–144, Arg-185, Tyr-195, and Arg-232; that span reads EDF. A Mg(2+)-binding site is contributed by Thr-80. Positions 196–266 are small ATPAse domain (RuvB-S); that stretch reads NTDDLAHIVT…AANQALAMLE (71 aa). The interval 269–357 is head domain (RuvB-H); the sequence is PQGLDLMDRK…QPSSGDLFGA (89 aa). Positions 305, 324, and 329 each coordinate DNA.

This sequence belongs to the RuvB family. In terms of assembly, homohexamer. Forms an RuvA(8)-RuvB(12)-Holliday junction (HJ) complex. HJ DNA is sandwiched between 2 RuvA tetramers; dsDNA enters through RuvA and exits via RuvB. An RuvB hexamer assembles on each DNA strand where it exits the tetramer. Each RuvB hexamer is contacted by two RuvA subunits (via domain III) on 2 adjacent RuvB subunits; this complex drives branch migration. In the full resolvosome a probable DNA-RuvA(4)-RuvB(12)-RuvC(2) complex forms which resolves the HJ.

The protein localises to the cytoplasm. It carries out the reaction ATP + H2O = ADP + phosphate + H(+). The RuvA-RuvB-RuvC complex processes Holliday junction (HJ) DNA during genetic recombination and DNA repair, while the RuvA-RuvB complex plays an important role in the rescue of blocked DNA replication forks via replication fork reversal (RFR). RuvA specifically binds to HJ cruciform DNA, conferring on it an open structure. The RuvB hexamer acts as an ATP-dependent pump, pulling dsDNA into and through the RuvAB complex. RuvB forms 2 homohexamers on either side of HJ DNA bound by 1 or 2 RuvA tetramers; 4 subunits per hexamer contact DNA at a time. Coordinated motions by a converter formed by DNA-disengaged RuvB subunits stimulates ATP hydrolysis and nucleotide exchange. Immobilization of the converter enables RuvB to convert the ATP-contained energy into a lever motion, pulling 2 nucleotides of DNA out of the RuvA tetramer per ATP hydrolyzed, thus driving DNA branch migration. The RuvB motors rotate together with the DNA substrate, which together with the progressing nucleotide cycle form the mechanistic basis for DNA recombination by continuous HJ branch migration. Branch migration allows RuvC to scan DNA until it finds its consensus sequence, where it cleaves and resolves cruciform DNA. The sequence is that of Holliday junction branch migration complex subunit RuvB from Bordetella avium (strain 197N).